Consider the following 185-residue polypeptide: Large ribosomal subunit protein uL16m (185 aa).

This sequence belongs to the universal ribosomal protein uL16 family.

It localises to the mitochondrion. The chain is Large ribosomal subunit protein uL16m (RPL16) from Zea mays (Maize).